Reading from the N-terminus, the 729-residue chain is Cellulose synthase catalytic subunit [UDP-forming] (729 aa).

The next 3 helical transmembrane spans lie at 30-50 (LATW…VAVP), 110-130 (FILG…LVLG), and 171-191 (TTVL…IHLL). The segment at 151-244 (LWPSVDVFIP…YVAIFDCDHI (94 aa)) is catalytic subdomain A. Aspartate 193 is a catalytic residue. The substrate site is built by aspartate 240 and aspartate 242. Residues 321–381 (TALEEVGGVA…AQRIRWARGM (61 aa)) are catalytic subdomain B. The active site involves aspartate 337. The next 5 helical transmembrane spans lie at 405–425 (LNAM…TAPL), 427–447 (YLFF…AYAL), 520–540 (LFLL…LIYV), 549–569 (IWFN…TIAT), and 610–630 (MAIM…QIGL). One can recognise a PilZ domain in the interval 575-671 (QVRSAHRVPL…QERWLVASTF (97 aa)).

Belongs to the glycosyltransferase 2 family. It depends on Mg(2+) as a cofactor.

Its subcellular location is the cell inner membrane. It carries out the reaction [(1-&gt;4)-beta-D-glucosyl](n) + UDP-alpha-D-glucose = [(1-&gt;4)-beta-D-glucosyl](n+1) + UDP + H(+). It functions in the pathway glycan metabolism; bacterial cellulose biosynthesis. With respect to regulation, activated by bis-(3'-5') cyclic diguanylic acid (c-di-GMP). Its function is as follows. Catalytic subunit of cellulose synthase. It polymerizes uridine 5'-diphosphate glucose to cellulose, which is produced as an extracellular component for mechanical and chemical protection. The sequence is that of Cellulose synthase catalytic subunit [UDP-forming] (bcsA) from Xanthomonas axonopodis pv. citri (strain 306).